We begin with the raw amino-acid sequence, 664 residues long: CRISPR-associated DNA-binding protein Cas12m (664 aa).

The recognition domain (REC1-N) stretch occupies residues 1–137; the sequence is MKRVTITIDG…AKYRELIGSD (137 aa). Residues 138-212 are recognition domain (REC2); the sequence is EETAQMDTEI…AAKDRIRAAG (75 aa). The segment at 213–270 is recognition domain (REC1-C); sequence NDIENLEKDRQAAVIKAYNNSGLWWGNYNAVLESYKKARIKALKDGAELKYHRFDGSG. The segment at 271-390 is wedge domain (WED); the sequence is RFTNQIQGGM…VWSVVFTFTT (120 aa). The interval 391-404 is linker; it reads DCPTYDQRSSTGNR. Residues 405–618 form a ruvC-I region; the sequence is CGLNLGWKKQ…KNGTQIEQVS (214 aa). Positions 618–650 are target nucleic-acid binding (TNB); that stretch reads STASSATCSACKGKMEQVDGIMWRCRECRALVD. 4 residues coordinate Zn(2+): C625, C628, C642, and C645. The segment at 651 to 664 is ruvC-II; it reads QDINAAANLFREVL. A Mg(2+)-binding site is contributed by D652.

This sequence belongs to the CRISPR-associated DNA-binding protein Cas12m family. It depends on Mg(2+) as a cofactor. Zn(2+) is required as a cofactor.

In terms of biological role, CRISPR (clustered regularly interspaced short palindromic repeat), is an adaptive immune system that provides protection against mobile genetic elements (viruses, transposable elements and conjugative plasmids). CRISPR clusters contain sequences complementary to antecedent mobile elements and target invading nucleic acids. CRISPR clusters are transcribed and processed into CRISPR RNA (crRNA). Recognizes a short motif in the CRISPR repeat sequences (the 5' PAM or protospacer adjacent motif, 5'-CCN-3' in this organism) to help distinguish self versus nonself, as targets within the bacterial CRISPR locus do not have PAMs. Cas12m-crRNA binds DNA in a PAM-dependent, crRNA-guided fashion. DNA-binding probably inhibits transcription, leading to gene silencing. Upon expression in E.coli as a CRISPR region preferentially binds to its associated crRNA. Probably required for pre-crRNA processing to mature crRNA. This is CRISPR-associated DNA-binding protein Cas12m from Pelobacter propionicus (strain DSM 2379 / NBRC 103807 / OttBd1).